The chain runs to 201 residues: NAD(P)H dehydrogenase (quinone) (201 aa).

Positions 7–192 (ILVLYYSMYG…SIARYQGEYV (186 aa)) constitute a Flavodoxin-like domain. FMN is bound by residues 13 to 18 (SMYGHI) and 81 to 83 (TRF). Y15 contacts NAD(+). W101 is a substrate binding site. FMN-binding positions include 116–121 (STGTGG) and H136.

The protein belongs to the WrbA family. It depends on FMN as a cofactor.

It carries out the reaction a quinone + NADH + H(+) = a quinol + NAD(+). It catalyses the reaction a quinone + NADPH + H(+) = a quinol + NADP(+). This Shigella sonnei (strain Ss046) protein is NAD(P)H dehydrogenase (quinone).